The chain runs to 116 residues: MKHMSNVKIERYESIIKDLISHAITTLVYDDLIKQATVHYVTLSKDKSIAKVYISCYDKTIIDKILKKINGASGFFRTILAKNLNLRKAPAIVFLNDESIDKIDEINSLLEQIKGK.

It belongs to the RbfA family. In terms of assembly, monomer. Binds 30S ribosomal subunits, but not 50S ribosomal subunits or 70S ribosomes.

Its subcellular location is the cytoplasm. One of several proteins that assist in the late maturation steps of the functional core of the 30S ribosomal subunit. Associates with free 30S ribosomal subunits (but not with 30S subunits that are part of 70S ribosomes or polysomes). Required for efficient processing of 16S rRNA. May interact with the 5'-terminal helix region of 16S rRNA. The protein is Ribosome-binding factor A of Malacoplasma penetrans (strain HF-2) (Mycoplasma penetrans).